The following is a 127-amino-acid chain: Anti-adapter protein IraD (127 aa).

This sequence belongs to the GpW/Gp25 family. IraD subfamily. In terms of assembly, interacts with RssB.

Its subcellular location is the cytoplasm. Its function is as follows. Inhibits RpoS proteolysis by regulating RssB activity, thereby increasing the stability of the sigma stress factor RpoS during oxidative stress. Its effect on RpoS stability is due to its interaction with RssB, which probably blocks the interaction of RssB with RpoS, and the consequent delivery of the RssB-RpoS complex to the ClpXP protein degradation pathway. This chain is Anti-adapter protein IraD, found in Escherichia coli O6:H1 (strain CFT073 / ATCC 700928 / UPEC).